The chain runs to 671 residues: Putative glycoside hydrolase BT_3595 (671 aa).

Positions 1 to 24 (MITGIISILCYLQCFGTLSASVTA) are cleaved as a signal peptide.

This sequence belongs to the glycoside hydrolase-like 3 (GHL3) family.

The polypeptide is Putative glycoside hydrolase BT_3595 (Bacteroides thetaiotaomicron (strain ATCC 29148 / DSM 2079 / JCM 5827 / CCUG 10774 / NCTC 10582 / VPI-5482 / E50)).